A 312-amino-acid chain; its full sequence is Glycine--tRNA ligase alpha subunit (312 aa).

The protein belongs to the class-II aminoacyl-tRNA synthetase family. As to quaternary structure, tetramer of two alpha and two beta subunits.

Its subcellular location is the cytoplasm. The enzyme catalyses tRNA(Gly) + glycine + ATP = glycyl-tRNA(Gly) + AMP + diphosphate. The protein is Glycine--tRNA ligase alpha subunit (glyQ) of Buchnera aphidicola subsp. Acyrthosiphon pisum (strain APS) (Acyrthosiphon pisum symbiotic bacterium).